Consider the following 354-residue polypeptide: Glutaminyl-peptide cyclotransferase (354 aa).

The N-terminal 8 residues, 1 to 8 (MRLLLRNY), are a transit peptide targeting the mitochondrion. An intrachain disulfide couples Cys136 to Cys158. Asp153 is a Zn(2+) binding site. The active-site Proton acceptor is the Glu190. Glu191 serves as a coordination point for Zn(2+). The active-site Proton acceptor is the Asp228. Position 318 (His318) interacts with Zn(2+).

The protein belongs to the glutaminyl-peptide cyclotransferase family.

Its subcellular location is the secreted. It localises to the mitochondrion. It carries out the reaction N-terminal L-glutaminyl-[peptide] = N-terminal 5-oxo-L-prolyl-[peptide] + NH4(+). With respect to regulation, inhibited by imidazoles (imidazole, benzimidazole, 1-benzylimidazole, 1-methylimidazole, P150/03 and N-omega-acetylhistamine) and cysteamines (cysteamine and N-dimethylcysteamine). Inhibited by PDB50 1(3,4-dimethoxyphenyl)-3-(3-imidazol-1-ylpropyl)thiourea. Its function is as follows. Acts as a glutaminyl-peptide cyclotransferase. Responsible for the biosynthesis of pyroglutamyl peptides. Might be more efficient in the conversion of tri and tetrapeptides in vitro. Might have a relative preference for substrates containing hydrophobic amino acids in vitro. The polypeptide is Glutaminyl-peptide cyclotransferase (Drosophila melanogaster (Fruit fly)).